A 64-amino-acid chain; its full sequence is Alpha-toxin Amm5 (64 aa).

Positions 2 to 64 constitute an LCN-type CS-alpha/beta domain; the sequence is KDGYIIDDLN…VSIKEKGRCN (63 aa). 4 disulfides stabilise this stretch: Cys-12–Cys-63, Cys-16–Cys-36, Cys-22–Cys-46, and Cys-26–Cys-48. Asn-64 bears the Asparagine amide mark.

As to expression, expressed by the venom gland.

It is found in the secreted. Functionally, alpha toxins bind voltage-independently at site-3 of sodium channels (Nav) and inhibit the inactivation of the activated channels, thereby blocking neuronal transmission. This is Alpha-toxin Amm5 from Androctonus mauritanicus mauritanicus (Scorpion).